Reading from the N-terminus, the 513-residue chain is Sugar transport protein MST8 (513 aa).

Residues 1–17 (MAGGAMTDTDGAHKNYP) lie on the Cytoplasmic side of the membrane. The chain crosses the membrane as a helical span at residues 18–38 (GKMTIFVFLACLVASSGGLIF). The Extracellular segment spans residues 39–81 (GYDIGISGGVTSMDSFLIKFFPSVYAKEKEMVETNQYCKFDSE). A helical membrane pass occupies residues 82–102 (LLTLFTSSLYLAALIASLFAS). Residues 103–116 (VITRKFGRRITMLG) are Cytoplasmic-facing. The chain crosses the membrane as a helical span at residues 117 to 137 (GGVIFLVGAILNGAAADVAML). The Extracellular portion of the chain corresponds to 138–139 (II). The chain crosses the membrane as a helical span at residues 140-160 (GRILLGIGVGFSNQAVPLYLS). The Cytoplasmic portion of the chain corresponds to 161–166 (EMAPAR). Residues 167–187 (MRGMLNISFQLMITVGILAAN) traverse the membrane as a helical segment. Topologically, residues 188 to 201 (LINYFTDKIAGGWG) are extracellular. The helical transmembrane segment at 202–222 (WRVSLGLAAVPAVIMAGGSLF) threads the bilayer. The Cytoplasmic segment spans residues 223–294 (LPDTPNSLLS…LVMSVLIPTL (72 aa)). Residues 295-315 (QQLTGINVVMFYAPVLFKTIG) form a helical membrane-spanning segment. Topologically, residues 316-320 (FGGTA) are extracellular. Residues 321-341 (SLMSAVITGLVNMFATFVSIA) form a helical membrane-spanning segment. The Cytoplasmic portion of the chain corresponds to 342-347 (TVDRLG). A helical membrane pass occupies residues 348-368 (RRKLLLQGGVQMIFAQFILGT). Topologically, residues 369 to 385 (LIAVKFGTAGVANISRG) are extracellular. The chain crosses the membrane as a helical span at residues 386-406 (YAIVVVLCICVFVSAFAWSWG). At 407 to 425 (PLGWLVPSEIFPLEIRSAA) the chain is on the cytoplasmic side. The chain crosses the membrane as a helical span at residues 426 to 446 (QSVVVVFNMAFTFIIAQIFLM). The Extracellular portion of the chain corresponds to 447–450 (MLCH). Residues 451 to 471 (LKFGLFYFFGAMELIMTGFVF) traverse the membrane as a helical segment. The Cytoplasmic segment spans residues 472 to 512 (FFLPETKGIPIEEMDRIWGKHWYWRRFVGAGAGGKVEITST).

This sequence belongs to the major facilitator superfamily. Sugar transporter (TC 2.A.1.1) family. Expressed specifically in anthers.

It is found in the membrane. Mediates active uptake of hexoses by sugar:proton symport. May play an important role in transporting monosaccharides during anther development. This Oryza sativa subsp. japonica (Rice) protein is Sugar transport protein MST8.